The chain runs to 454 residues: Bifunctional protein GlmU (454 aa).

Residues 1–228 (MTLPLHVVIL…PQDVEGANDP (228 aa)) form a pyrophosphorylase region. UDP-N-acetyl-alpha-D-glucosamine is bound by residues 10 to 13 (LAAG), K24, Q76, 81 to 82 (GT), 103 to 105 (YGD), G138, E153, N168, and N226. D105 serves as a coordination point for Mg(2+). N226 is a Mg(2+) binding site. The interval 229–249 (WQLAQLERAWQLRAARALSLQ) is linker. The tract at residues 250 to 454 (GVRMADPARV…IEGWERPTKK (205 aa)) is N-acetyltransferase. The UDP-N-acetyl-alpha-D-glucosamine site is built by R332 and K350. The active-site Proton acceptor is the H362. Positions 365 and 376 each coordinate UDP-N-acetyl-alpha-D-glucosamine. Residues A379, 385-386 (NY), S404, A422, and R439 each bind acetyl-CoA.

In the N-terminal section; belongs to the N-acetylglucosamine-1-phosphate uridyltransferase family. This sequence in the C-terminal section; belongs to the transferase hexapeptide repeat family. As to quaternary structure, homotrimer. It depends on Mg(2+) as a cofactor.

It localises to the cytoplasm. It carries out the reaction alpha-D-glucosamine 1-phosphate + acetyl-CoA = N-acetyl-alpha-D-glucosamine 1-phosphate + CoA + H(+). The enzyme catalyses N-acetyl-alpha-D-glucosamine 1-phosphate + UTP + H(+) = UDP-N-acetyl-alpha-D-glucosamine + diphosphate. It functions in the pathway nucleotide-sugar biosynthesis; UDP-N-acetyl-alpha-D-glucosamine biosynthesis; N-acetyl-alpha-D-glucosamine 1-phosphate from alpha-D-glucosamine 6-phosphate (route II): step 2/2. Its pathway is nucleotide-sugar biosynthesis; UDP-N-acetyl-alpha-D-glucosamine biosynthesis; UDP-N-acetyl-alpha-D-glucosamine from N-acetyl-alpha-D-glucosamine 1-phosphate: step 1/1. It participates in bacterial outer membrane biogenesis; LPS lipid A biosynthesis. Functionally, catalyzes the last two sequential reactions in the de novo biosynthetic pathway for UDP-N-acetylglucosamine (UDP-GlcNAc). The C-terminal domain catalyzes the transfer of acetyl group from acetyl coenzyme A to glucosamine-1-phosphate (GlcN-1-P) to produce N-acetylglucosamine-1-phosphate (GlcNAc-1-P), which is converted into UDP-GlcNAc by the transfer of uridine 5-monophosphate (from uridine 5-triphosphate), a reaction catalyzed by the N-terminal domain. The chain is Bifunctional protein GlmU from Xanthomonas oryzae pv. oryzae (strain MAFF 311018).